Consider the following 365-residue polypeptide: 4-hydroxy-tetrahydrodipicolinate synthase 1, chloroplastic (365 aa).

A chloroplast-targeting transit peptide spans 1-39 (MSALKNYGLISIDSALHFPRSNQLQSYKRRNAKWVSPIA). T108 lines the pyruvate pocket. The Proton donor/acceptor role is filled by Y194. K222 serves as the catalytic Schiff-base intermediate with substrate. I261 contacts pyruvate.

This sequence belongs to the DapA family.

The protein localises to the plastid. It localises to the chloroplast. It catalyses the reaction L-aspartate 4-semialdehyde + pyruvate = (2S,4S)-4-hydroxy-2,3,4,5-tetrahydrodipicolinate + H2O + H(+). It participates in amino-acid biosynthesis; L-lysine biosynthesis via DAP pathway; (S)-tetrahydrodipicolinate from L-aspartate: step 3/4. Functionally, catalyzes the condensation of (S)-aspartate-beta-semialdehyde [(S)-ASA] and pyruvate to 4-hydroxy-tetrahydrodipicolinate (HTPA). This chain is 4-hydroxy-tetrahydrodipicolinate synthase 1, chloroplastic (DHDPS1), found in Arabidopsis thaliana (Mouse-ear cress).